Reading from the N-terminus, the 120-residue chain is Large ribosomal subunit protein uL24 (120 aa).

The disordered stretch occupies residues 1-26 (MVRVISSQPRKQRKARYNAPHHMRGS). Basic residues predominate over residues 10-24 (RKQRKARYNAPHHMR).

It belongs to the universal ribosomal protein uL24 family. In terms of assembly, part of the 50S ribosomal subunit.

Functionally, one of two assembly initiator proteins, it binds directly to the 5'-end of the 23S rRNA, where it nucleates assembly of the 50S subunit. Its function is as follows. Located at the polypeptide exit tunnel on the outside of the subunit. The sequence is that of Large ribosomal subunit protein uL24 from Methanospirillum hungatei JF-1 (strain ATCC 27890 / DSM 864 / NBRC 100397 / JF-1).